Reading from the N-terminus, the 167-residue chain is Multifunctional Ser/Thr-tRNA deacylase ProXp-y (167 aa).

It is found in the cytoplasm. It catalyses the reaction L-seryl-tRNA(Lys) + H2O = tRNA(Lys) + L-serine. It carries out the reaction L-threonyl-tRNA(Lys) + H2O = tRNA(Lys) + L-threonine. The enzyme catalyses L-homoseryl-tRNA(Lys) + H2O = tRNA(Lys) + L-homoserine + H(+). The catalysed reaction is L-seryl-tRNA(Ala) + H2O = tRNA(Ala) + L-serine. It catalyses the reaction L-homoseryl-tRNA(Ser) + H2O = tRNA(Ser) + L-homoserine + H(+). It carries out the reaction L-seryl-tRNA(Thr) + H2O = tRNA(Thr) + L-serine. The enzyme catalyses L-threonyl-tRNA(Ile) + H2O = tRNA(Ile) + L-threonine. The catalysed reaction is L-threonyl-tRNA(Val) + H2O = tRNA(Val) + L-threonine. It catalyses the reaction L-threonyl-tRNA(Ser) + H2O = tRNA(Ser) + L-threonine. In terms of biological role, an aminoacyl-tRNA editing enzyme that deacylates Ser-tRNA and/or Thr-tRNA mischarged by lysyl-tRNA synthetase (LysRS), threonyl-tRNA synthetase (ThrRS), seryl-tRNA synthetase (SerRS), alanyl-tRNA synthetase (AlaRS), valyl-tRNA synthetase (ValRS) and isoleucyl-tRNA synthetase (IleRS) in vitro. Also deacylates mischarged Hse-tRNA(Lys) and Hse-tRNA(Ser), and cognate Ser-tRNA(Ser) and Thr-tRNA(Thr) in vitro. The presence of cognate ThrRS abolishes the Thr-tRNA(Thr) deacylase activity, hence this activity is not applicable physiologically. Not able to remove the amino acid moiety from cognate Val-tRNA(Val), Ile-tRNA(Ile), Lys-tRNA(Lys), Ala-tRNA(Ala) or Pro-tRNA(Pro), or from incorrectly charged Ala-tRNA(Pro), Cys-tRNA(Pro) or Leu-tRNA(Pro) in vitro. May be required in vivo to prevent mistranslation and to maintain growth when the error prone stress-inducible lysyl-tRNA synthetase (LysU) is expressed under environmental pressure. The chain is Multifunctional Ser/Thr-tRNA deacylase ProXp-y from Escherichia coli O157:H7.